Consider the following 115-residue polypeptide: Large ribosomal subunit protein bL19 (115 aa).

This sequence belongs to the bacterial ribosomal protein bL19 family.

This protein is located at the 30S-50S ribosomal subunit interface and may play a role in the structure and function of the aminoacyl-tRNA binding site. This chain is Large ribosomal subunit protein bL19, found in Latilactobacillus sakei subsp. sakei (strain 23K) (Lactobacillus sakei subsp. sakei).